The sequence spans 172 residues: MKNIVLIGFMGTGKTAVGRRLAGRLKREFIDTDAEIEKVTGKTVAQIFARDGQIRFRSEEALLVRKLAGKENLVISTGGGMVLNPENVRLLKENGVLIALTADPEVICRRVKNKKNRPLLMRGDLRENIKALLKEREGVYDVAEHKVDTGSMSLDQAVENIIHFLKEHNYIE.

11-16 (GTGKTA) contacts ATP. T15 provides a ligand contact to Mg(2+). Residues D33, R57, and G79 each contribute to the substrate site. R117 lines the ATP pocket. Position 136 (R136) interacts with substrate.

The protein belongs to the shikimate kinase family. Monomer. Requires Mg(2+) as cofactor.

The protein resides in the cytoplasm. It catalyses the reaction shikimate + ATP = 3-phosphoshikimate + ADP + H(+). The protein operates within metabolic intermediate biosynthesis; chorismate biosynthesis; chorismate from D-erythrose 4-phosphate and phosphoenolpyruvate: step 5/7. In terms of biological role, catalyzes the specific phosphorylation of the 3-hydroxyl group of shikimic acid using ATP as a cosubstrate. This is Shikimate kinase from Pelotomaculum thermopropionicum (strain DSM 13744 / JCM 10971 / SI).